Reading from the N-terminus, the 97-residue chain is YcgL domain-containing protein PSPTO_3921 (97 aa).

The 85-residue stretch at 3–87 (RICSIYRSPK…AEDEYIEHLP (85 aa)) folds into the YcgL domain.

This Pseudomonas syringae pv. tomato (strain ATCC BAA-871 / DC3000) protein is YcgL domain-containing protein PSPTO_3921.